A 167-amino-acid polypeptide reads, in one-letter code: Ubiquitin-fold modifier-conjugating enzyme 1 (167 aa).

The active-site Glycyl thioester intermediate is C116.

This sequence belongs to the ubiquitin-conjugating enzyme family. UFC1 subfamily. As to quaternary structure, interacts with UBA5 (via C-terminus). Interacts with UFL1. Interacts with UFM1.

In terms of biological role, E2-like enzyme which specifically catalyzes the second step in ufmylation. Accepts the ubiquitin-like modifier UFM1 from the E1 enzyme UBA5 and forms an intermediate with UFM1 via a thioester linkage. Ufmylation is involved in various processes, such as ribosome recycling, response to DNA damage, interferon response or reticulophagy (also called ER-phagy). In Osmerus mordax (Rainbow smelt), this protein is Ubiquitin-fold modifier-conjugating enzyme 1.